Here is a 354-residue protein sequence, read N- to C-terminus: MFQKKTYAVFLILLLMMFTAACSGSKTSAEKKESETEKSSDIAQVKIKDVSYTLPSKYDKSTSDDQLVLKVNVAVKNTGKDPLNVDSMDFTLYQGDTKMSDTDPEDYSEKLQGSTINADKSVEGNLFFVVDKGKQYELNYTPESYGDKKPKSVTFKIDGKDKKILATADKLQDSAKALSAYVDVLLFGKDNADFEKITGANKNEIVNDFNESAKDGYLSASGLSSTYADSKALDNIVNGIKEGLSKNSSIQAKTTSISKDEAIVEATVKPVDASSLSDRIEDKVKDYYSKNSSASYEEAVKYALQVYPEEFKKLGPASSEKTVEVKMKKNDIDQWQLDMDDYRAAELVEAFIKE.

The first 21 residues, 1–21 (MFQKKTYAVFLILLLMMFTAA), serve as a signal peptide directing secretion. Cys22 carries the N-palmitoyl cysteine lipid modification. A lipid anchor (S-diacylglycerol cysteine) is attached at Cys22.

It is found in the cell membrane. The protein localises to the membrane raft. This is an uncharacterized protein from Bacillus subtilis (strain 168).